The sequence spans 228 residues: uncharacterized protein (228 aa).

S-adenosyl-L-methionine contacts are provided by residues 77-79 (TTA), Gly-113, Val-133, and 140-142 (PSL).

This sequence belongs to the class IV-like SAM-binding methyltransferase superfamily. RNA methyltransferase TrmH family.

This is an uncharacterized protein from Escherichia coli (strain K12).